We begin with the raw amino-acid sequence, 263 residues long: 3-methyl-2-oxobutanoate hydroxymethyltransferase (263 aa).

Mg(2+)-binding residues include Asp-45 and Asp-84. Residues 45-46, Asp-84, and Lys-112 contribute to the 3-methyl-2-oxobutanoate site; that span reads DS. Glu-114 contributes to the Mg(2+) binding site. Residue Glu-181 is the Proton acceptor of the active site.

The protein belongs to the PanB family. In terms of assembly, homodecamer; pentamer of dimers. Mg(2+) is required as a cofactor.

The protein resides in the cytoplasm. It carries out the reaction 3-methyl-2-oxobutanoate + (6R)-5,10-methylene-5,6,7,8-tetrahydrofolate + H2O = 2-dehydropantoate + (6S)-5,6,7,8-tetrahydrofolate. It functions in the pathway cofactor biosynthesis; (R)-pantothenate biosynthesis; (R)-pantoate from 3-methyl-2-oxobutanoate: step 1/2. Its function is as follows. Catalyzes the reversible reaction in which hydroxymethyl group from 5,10-methylenetetrahydrofolate is transferred onto alpha-ketoisovalerate to form ketopantoate. This is 3-methyl-2-oxobutanoate hydroxymethyltransferase from Buchnera aphidicola subsp. Schizaphis graminum (strain Sg).